A 466-amino-acid chain; its full sequence is Soluble pyridine nucleotide transhydrogenase (466 aa).

36-45 (ERYQNVGGGC) lines the FAD pocket.

It belongs to the class-I pyridine nucleotide-disulfide oxidoreductase family. FAD is required as a cofactor.

Its subcellular location is the cytoplasm. It catalyses the reaction NAD(+) + NADPH = NADH + NADP(+). Functionally, conversion of NADPH, generated by peripheral catabolic pathways, to NADH, which can enter the respiratory chain for energy generation. The polypeptide is Soluble pyridine nucleotide transhydrogenase (Escherichia coli O6:K15:H31 (strain 536 / UPEC)).